The primary structure comprises 346 residues: Phosphoribosylformylglycinamidine cyclo-ligase (346 aa).

Belongs to the AIR synthase family.

It is found in the cytoplasm. It carries out the reaction 2-formamido-N(1)-(5-O-phospho-beta-D-ribosyl)acetamidine + ATP = 5-amino-1-(5-phospho-beta-D-ribosyl)imidazole + ADP + phosphate + H(+). It participates in purine metabolism; IMP biosynthesis via de novo pathway; 5-amino-1-(5-phospho-D-ribosyl)imidazole from N(2)-formyl-N(1)-(5-phospho-D-ribosyl)glycinamide: step 2/2. The sequence is that of Phosphoribosylformylglycinamidine cyclo-ligase from Aliivibrio fischeri (strain ATCC 700601 / ES114) (Vibrio fischeri).